The following is a 334-amino-acid chain: MIDEDRLISGTQKIDENFIDRAIRPKFLADYEGQPQVNKQMEIFIEAARQRNEALDHLLIFGPPGLGKTTLSHIVANELEVNIKTTSGPILEKAGDLAALLTNLEENDVLFIDEIHRLSPVVEEILYPAMEDYQLDIMIGEGPAARSIKLDLPAFTLIGATTRAGSLTSPLRDRFGIVQRLEYYDLKSLTRIVLRSAGHFKLNMSEAGAVEIARRSRGTPRIANRLLRRVRDYAQVKKANVIDDDVAKLALDMLEVDNEGFDYMDRKLLMAILDTFMGGPVGLDNLAAAIGEEKETIEDVLEPYLIQQGFLQRTPRGRIATNRTYLHFGFDKPQ.

The segment at 4–184 (EDRLISGTQK…FGIVQRLEYY (181 aa)) is large ATPase domain (RuvB-L). ATP-binding positions include Ile-23, Arg-24, Gly-65, Lys-68, Thr-69, Thr-70, 131 to 133 (EDY), Arg-174, Tyr-184, and Arg-221. Residue Thr-69 participates in Mg(2+) binding. A small ATPAse domain (RuvB-S) region spans residues 185 to 255 (DLKSLTRIVL…VAKLALDMLE (71 aa)). The interval 258–334 (NEGFDYMDRK…YLHFGFDKPQ (77 aa)) is head domain (RuvB-H). The DNA site is built by Arg-313 and Arg-318.

This sequence belongs to the RuvB family. As to quaternary structure, homohexamer. Forms an RuvA(8)-RuvB(12)-Holliday junction (HJ) complex. HJ DNA is sandwiched between 2 RuvA tetramers; dsDNA enters through RuvA and exits via RuvB. An RuvB hexamer assembles on each DNA strand where it exits the tetramer. Each RuvB hexamer is contacted by two RuvA subunits (via domain III) on 2 adjacent RuvB subunits; this complex drives branch migration. In the full resolvosome a probable DNA-RuvA(4)-RuvB(12)-RuvC(2) complex forms which resolves the HJ.

It is found in the cytoplasm. The catalysed reaction is ATP + H2O = ADP + phosphate + H(+). Its function is as follows. The RuvA-RuvB-RuvC complex processes Holliday junction (HJ) DNA during genetic recombination and DNA repair, while the RuvA-RuvB complex plays an important role in the rescue of blocked DNA replication forks via replication fork reversal (RFR). RuvA specifically binds to HJ cruciform DNA, conferring on it an open structure. The RuvB hexamer acts as an ATP-dependent pump, pulling dsDNA into and through the RuvAB complex. RuvB forms 2 homohexamers on either side of HJ DNA bound by 1 or 2 RuvA tetramers; 4 subunits per hexamer contact DNA at a time. Coordinated motions by a converter formed by DNA-disengaged RuvB subunits stimulates ATP hydrolysis and nucleotide exchange. Immobilization of the converter enables RuvB to convert the ATP-contained energy into a lever motion, pulling 2 nucleotides of DNA out of the RuvA tetramer per ATP hydrolyzed, thus driving DNA branch migration. The RuvB motors rotate together with the DNA substrate, which together with the progressing nucleotide cycle form the mechanistic basis for DNA recombination by continuous HJ branch migration. Branch migration allows RuvC to scan DNA until it finds its consensus sequence, where it cleaves and resolves cruciform DNA. This chain is Holliday junction branch migration complex subunit RuvB, found in Psychromonas ingrahamii (strain DSM 17664 / CCUG 51855 / 37).